The following is a 298-amino-acid chain: Foldase protein PrsA 1 (298 aa).

Positions 1–23 are cleaved as a signal peptide; the sequence is MNKTWKKAATVLAFAGIALSATA. Cys24 carries N-palmitoyl cysteine lipidation. Residue Cys24 is the site of S-diacylglycerol cysteine attachment. The 94-residue stretch at 141–234 folds into the PpiC domain; sequence QPEVTVQHIL…YGYHVIKMIK (94 aa).

It belongs to the PrsA family.

The protein localises to the cell membrane. It carries out the reaction [protein]-peptidylproline (omega=180) = [protein]-peptidylproline (omega=0). Functionally, plays a major role in protein secretion by helping the post-translocational extracellular folding of several secreted proteins. In Lactobacillus johnsonii (strain CNCM I-12250 / La1 / NCC 533), this protein is Foldase protein PrsA 1 (prsA1).